Reading from the N-terminus, the 137-residue chain is Large ribosomal subunit protein uL16 (137 aa).

It belongs to the universal ribosomal protein uL16 family. As to quaternary structure, part of the 50S ribosomal subunit.

Functionally, binds 23S rRNA and is also seen to make contacts with the A and possibly P site tRNAs. In Methylobacterium sp. (strain 4-46), this protein is Large ribosomal subunit protein uL16.